Consider the following 766-residue polypeptide: MSTVNAKGAKPATDANGQSLNPEEPSEALREEYAQLSDRVREARAAYYVHDQPVISDAEYDQLYRSLEEFEALHPELKANDSPTQEVGGEVGAAFSPVKHLEKMYSLEDVFSTDELVAWLERAQKQVAELPGAPEVAWLSEVKIDGLAVNLLYRDGVLVRAATRGDGTTGEDITHNVATIKTIPQRLSGENLPEEVEVRGEVFISSKDFRTLNEAMVEEGRAPFANPRNAAAGSLRQKDPQVTARRPLSMFVHGIGYVRGVDLETQSEAYEILRGWGLPVSPYSRVLSTVAEVLEFIAEFGDKRHALLHEIDGIVVKVDDRRTQFRLGYTSRVPRWAVAYKYPPEEVNTTLVDILVNVGRTGRVTPFGLMDPVRVAGSTVEMATLHNQDMVRAKGVLIGDTVVLRKAGDVIPEIVGPVVALRDGSEREFVMPAECPSCGTPLRPAKEGDVDIRCPNAETCPSQLKERVNHAAGRGAFDIEALGEEAARALTQPVPLDAPDGTELSVPPLRNEAGLFDLTPEDLRDVMVWRDARRTVTDEETGEKVQRVTPELVPYFWTKPTKARPSVPSKTTEQMFAQLEQAKDTELWRVLVALSIRHVGPTAARSLATSLRSMDAIRQADPETLAGTDGVGPVIAQAVQEFFAEPWRRRVVEQWAAAGVRMEEEVDESTPRTLEGVTVVVTGSLEGYSRDSAKEAILKRGGKASGSVSKKTHFLVAGDNAGTKLDKAESLGVPVLDEAGFEQLLAQGPEAFGDRADAADQPAAGE.

Residues 1-30 (MSTVNAKGAKPATDANGQSLNPEEPSEALR) form a disordered region. NAD(+) contacts are provided by residues 57–61 (DAEYD), 106–107 (SL), and E141. K143 serves as the catalytic N6-AMP-lysine intermediate. Residues R164, E201, K317, and K341 each contribute to the NAD(+) site. Zn(2+)-binding residues include C435, C438, C454, and C460. Residues 669 to 758 (STPRTLEGVT…PEAFGDRADA (90 aa)) enclose the BRCT domain. The segment at 747–766 (QGPEAFGDRADAADQPAAGE) is disordered.

Belongs to the NAD-dependent DNA ligase family. LigA subfamily. Mg(2+) is required as a cofactor. The cofactor is Mn(2+).

It catalyses the reaction NAD(+) + (deoxyribonucleotide)n-3'-hydroxyl + 5'-phospho-(deoxyribonucleotide)m = (deoxyribonucleotide)n+m + AMP + beta-nicotinamide D-nucleotide.. Its function is as follows. DNA ligase that catalyzes the formation of phosphodiester linkages between 5'-phosphoryl and 3'-hydroxyl groups in double-stranded DNA using NAD as a coenzyme and as the energy source for the reaction. It is essential for DNA replication and repair of damaged DNA. This chain is DNA ligase, found in Kocuria rhizophila (strain ATCC 9341 / DSM 348 / NBRC 103217 / DC2201).